Consider the following 477-residue polypeptide: Tripartite motif-containing protein 72 (477 aa).

The Zn(2+) site is built by Leu14, Gln17, Pro29, Cys31, Thr34, Gln37, Thr53, Pro56, Gly86, Leu89, Val97, Glu100, Leu105, Gly108, Gly114, and Lys117. The segment at 16 to 59 (CQLCLELFRAPVTPECGHTFCQGCLTGVPKNQDQNGSTPCPTCQ) adopts an RING-type zinc-finger fold. Residues 83-124 (VPQGHCLEHMDPLSVYCEQDKELICGVCASLGKHKGHNIITA) form a B box-type zinc finger. A coiled-coil region spans residues 135–232 (LPQQQVILQE…QMEGVLKDVE (98 aa)). The B30.2/SPRY domain occupies 272 to 476 (DEFKFQVWRK…LKIFYPPAEQ (205 aa)).

It belongs to the TRIM/RBCC family. As to quaternary structure, homodimer. Homooligomer; disulfide-linked. Oligomerizes on the phospholipid membrane. Disulfide bond formation at Cys-244 occurs in case of membrane damage that cause the entry of the oxidized milieu of the extracellular space, resulting in homooligomerization.

The protein resides in the cell membrane. Its subcellular location is the sarcolemma. It is found in the cytoplasmic vesicle membrane. It carries out the reaction S-ubiquitinyl-[E2 ubiquitin-conjugating enzyme]-L-cysteine + [acceptor protein]-L-lysine = [E2 ubiquitin-conjugating enzyme]-L-cysteine + N(6)-ubiquitinyl-[acceptor protein]-L-lysine.. The protein operates within protein modification; protein ubiquitination. Its activity is regulated as follows. Specifically binds phosphatidylserine. The binding to phospholipids enhances ubiquitination activity. Muscle-specific E3 ubiquitin-protein ligase that plays a central role in cell membrane repair by nucleating the assembly of the repair machinery at injury sites. Acts as a sensor of oxidation: upon membrane damage, entry of extracellular oxidative environment results in disulfide bond formation and homooligomerization at the injury site. This oligomerization acts as a nucleation site for recruitment of TRIM72-containing vesicles to the injury site, leading to membrane patch formation. Probably acts upstream of the Ca(2+)-dependent membrane resealing process. Required for transport of DYSF to sites of cell injury during repair patch formation. Regulates membrane budding and exocytosis. May be involved in the regulation of the mobility of KCNB1-containing endocytic vesicles. The protein is Tripartite motif-containing protein 72 (trim72) of Xenopus laevis (African clawed frog).